The following is a 205-amino-acid chain: Thiamine-phosphate synthase (205 aa).

4-amino-2-methyl-5-(diphosphooxymethyl)pyrimidine-binding positions include 34–38 (QLRCK) and Asn-66. Residues Asp-67 and Asp-86 each coordinate Mg(2+). Ser-105 contributes to the 4-amino-2-methyl-5-(diphosphooxymethyl)pyrimidine binding site. 131 to 133 (TTT) provides a ligand contact to 2-[(2R,5Z)-2-carboxy-4-methylthiazol-5(2H)-ylidene]ethyl phosphate. Lys-134 is a binding site for 4-amino-2-methyl-5-(diphosphooxymethyl)pyrimidine. Gly-163 contacts 2-[(2R,5Z)-2-carboxy-4-methylthiazol-5(2H)-ylidene]ethyl phosphate.

The protein belongs to the thiamine-phosphate synthase family. Mg(2+) is required as a cofactor.

The enzyme catalyses 2-[(2R,5Z)-2-carboxy-4-methylthiazol-5(2H)-ylidene]ethyl phosphate + 4-amino-2-methyl-5-(diphosphooxymethyl)pyrimidine + 2 H(+) = thiamine phosphate + CO2 + diphosphate. It catalyses the reaction 2-(2-carboxy-4-methylthiazol-5-yl)ethyl phosphate + 4-amino-2-methyl-5-(diphosphooxymethyl)pyrimidine + 2 H(+) = thiamine phosphate + CO2 + diphosphate. It carries out the reaction 4-methyl-5-(2-phosphooxyethyl)-thiazole + 4-amino-2-methyl-5-(diphosphooxymethyl)pyrimidine + H(+) = thiamine phosphate + diphosphate. Its pathway is cofactor biosynthesis; thiamine diphosphate biosynthesis; thiamine phosphate from 4-amino-2-methyl-5-diphosphomethylpyrimidine and 4-methyl-5-(2-phosphoethyl)-thiazole: step 1/1. Functionally, condenses 4-methyl-5-(beta-hydroxyethyl)thiazole monophosphate (THZ-P) and 2-methyl-4-amino-5-hydroxymethyl pyrimidine pyrophosphate (HMP-PP) to form thiamine monophosphate (TMP). The polypeptide is Thiamine-phosphate synthase (Neisseria meningitidis serogroup B (strain ATCC BAA-335 / MC58)).